Here is a 260-residue protein sequence, read N- to C-terminus: Hydroxyethylthiazole kinase 1 (260 aa).

Substrate is bound at residue M39. Residues R115 and T160 each contribute to the ATP site. G187 is a substrate binding site.

This sequence belongs to the Thz kinase family. It depends on Mg(2+) as a cofactor.

It catalyses the reaction 5-(2-hydroxyethyl)-4-methylthiazole + ATP = 4-methyl-5-(2-phosphooxyethyl)-thiazole + ADP + H(+). Its pathway is cofactor biosynthesis; thiamine diphosphate biosynthesis; 4-methyl-5-(2-phosphoethyl)-thiazole from 5-(2-hydroxyethyl)-4-methylthiazole: step 1/1. Its function is as follows. Catalyzes the phosphorylation of the hydroxyl group of 4-methyl-5-beta-hydroxyethylthiazole (THZ). The polypeptide is Hydroxyethylthiazole kinase 1 (Streptococcus pneumoniae (strain 70585)).